The primary structure comprises 244 residues: LexA repressor (244 aa).

The tract at residues 1–24 (MSDSSDTTVDGASDGASDGASGAD) is disordered. A compositionally biased stretch (low complexity) spans 10 to 24 (DGASDGASDGASGAD). Positions 58 to 78 (IREIGDAVGLTSTSSVAHQLR) form a DNA-binding region, H-T-H motif. Active-site for autocatalytic cleavage activity residues include Ser-168 and Lys-205.

It belongs to the peptidase S24 family. Homodimer.

The enzyme catalyses Hydrolysis of Ala-|-Gly bond in repressor LexA.. Functionally, represses a number of genes involved in the response to DNA damage (SOS response), including recA and lexA. In the presence of single-stranded DNA, RecA interacts with LexA causing an autocatalytic cleavage which disrupts the DNA-binding part of LexA, leading to derepression of the SOS regulon and eventually DNA repair. The sequence is that of LexA repressor from Mycobacterium ulcerans (strain Agy99).